A 64-amino-acid polypeptide reads, in one-letter code: Large ribosomal subunit protein bL35 (64 aa).

Positions 1–23 (MPKMKTHRGAAKRFKKTKNKIKR) are disordered.

It belongs to the bacterial ribosomal protein bL35 family.

This chain is Large ribosomal subunit protein bL35, found in Nitratiruptor sp. (strain SB155-2).